The following is a 146-amino-acid chain: uncharacterized protein (146 aa).

The tract at residues 67–93 is disordered; that stretch reads DDNGMESGFCSGATSTGQSASTSPAPV. Positions 77 to 92 are enriched in low complexity; that stretch reads SGATSTGQSASTSPAP.

This is an uncharacterized protein from Caenorhabditis elegans.